We begin with the raw amino-acid sequence, 214 residues long: Urease accessory protein UreG (214 aa).

The tract at residues 1–20 (MSQLHAVPGRTKKLPPLRVG) is disordered. 23-30 (GPVGSGKT) contributes to the GTP binding site.

It belongs to the SIMIBI class G3E GTPase family. UreG subfamily. In terms of assembly, homodimer. UreD, UreF and UreG form a complex that acts as a GTP-hydrolysis-dependent molecular chaperone, activating the urease apoprotein by helping to assemble the nickel containing metallocenter of UreC. The UreE protein probably delivers the nickel.

The protein localises to the cytoplasm. Facilitates the functional incorporation of the urease nickel metallocenter. This process requires GTP hydrolysis, probably effectuated by UreG. This Leptothrix cholodnii (strain ATCC 51168 / LMG 8142 / SP-6) (Leptothrix discophora (strain SP-6)) protein is Urease accessory protein UreG.